A 63-amino-acid polypeptide reads, in one-letter code: Large ribosomal subunit protein bL28 (63 aa).

Positions 11–20 are enriched in polar residues; the sequence is GNNSGASVSH. The disordered stretch occupies residues 11–30; it reads GNNSGASVSHSNKKTKRKWK. Residues 21 to 30 show a composition bias toward basic residues; sequence SNKKTKRKWK.

The protein belongs to the bacterial ribosomal protein bL28 family.

This is Large ribosomal subunit protein bL28 from Natranaerobius thermophilus (strain ATCC BAA-1301 / DSM 18059 / JW/NM-WN-LF).